The chain runs to 225 residues: 7-cyano-7-deazaguanine synthase (225 aa).

8 to 18 lines the ATP pocket; that stretch reads VSGGADSATVL. Zn(2+)-binding residues include Cys188, Cys198, Cys201, and Cys204.

It belongs to the QueC family. Zn(2+) is required as a cofactor.

The enzyme catalyses 7-carboxy-7-deazaguanine + NH4(+) + ATP = 7-cyano-7-deazaguanine + ADP + phosphate + H2O + H(+). The protein operates within purine metabolism; 7-cyano-7-deazaguanine biosynthesis. Its function is as follows. Catalyzes the ATP-dependent conversion of 7-carboxy-7-deazaguanine (CDG) to 7-cyano-7-deazaguanine (preQ(0)). This Rickettsia bellii (strain OSU 85-389) protein is 7-cyano-7-deazaguanine synthase.